The sequence spans 372 residues: Chaperone protein DnaJ (372 aa).

A J domain is found at E5–G69. The CR-type zinc finger occupies G129–A211. Zn(2+) contacts are provided by C142, C145, C159, C162, C185, C188, C199, and C202. CXXCXGXG motif repeat units follow at residues C142–G149, C159–G166, C185–G192, and C199–G206.

Belongs to the DnaJ family. Homodimer. Requires Zn(2+) as cofactor.

It localises to the cytoplasm. Functionally, participates actively in the response to hyperosmotic and heat shock by preventing the aggregation of stress-denatured proteins and by disaggregating proteins, also in an autonomous, DnaK-independent fashion. Unfolded proteins bind initially to DnaJ; upon interaction with the DnaJ-bound protein, DnaK hydrolyzes its bound ATP, resulting in the formation of a stable complex. GrpE releases ADP from DnaK; ATP binding to DnaK triggers the release of the substrate protein, thus completing the reaction cycle. Several rounds of ATP-dependent interactions between DnaJ, DnaK and GrpE are required for fully efficient folding. Also involved, together with DnaK and GrpE, in the DNA replication of plasmids through activation of initiation proteins. The protein is Chaperone protein DnaJ of Streptococcus pneumoniae (strain ATCC BAA-255 / R6).